Consider the following 420-residue polypeptide: Protein MucB (420 aa).

The UmuC domain maps to 2-187; it reads FALIDVNGMY…LPVAEVWGVG (186 aa).

The protein belongs to the DNA polymerase type-Y family.

In terms of biological role, involved in UV protection and mutation. This Escherichia coli protein is Protein MucB (mucB).